We begin with the raw amino-acid sequence, 331 residues long: Pyruvate dehydrogenase E1 component subunit beta (331 aa).

Glu60 contacts thiamine diphosphate. Leu113, Ala161, Ile162, Asp164, and Asn166 together coordinate K(+).

As to quaternary structure, heterodimer of an alpha and a beta chain. Thiamine diphosphate serves as cofactor.

It localises to the plastid. Its subcellular location is the chloroplast. It carries out the reaction N(6)-[(R)-lipoyl]-L-lysyl-[protein] + pyruvate + H(+) = N(6)-[(R)-S(8)-acetyldihydrolipoyl]-L-lysyl-[protein] + CO2. In terms of biological role, the pyruvate dehydrogenase complex catalyzes the overall conversion of pyruvate to acetyl-CoA and CO(2). It contains multiple copies of three enzymatic components: pyruvate dehydrogenase (E1), dihydrolipoamide acetyltransferase (E2) and lipoamide dehydrogenase (E3). This is Pyruvate dehydrogenase E1 component subunit beta (pdhB) from Porphyra purpurea (Red seaweed).